We begin with the raw amino-acid sequence, 197 residues long: MSSAPAPGSAPVCLTLWDEEDFQGRRCRLLSDCANVCERGALRRVRSVKVENGAWVAFEYPDFQGQQFILEKGDYPCWSAWSGSSGHHSNQLLSFRPVLCANHSDSRVTLFEGENFQGCKFELSDDYPSLPSMGWTSKDVGSLKVSSGAWVAYQYPGYRGYQYVLERDRHSGEFRTYSDFGTQAHTGQLQSIRRVQH.

Residues 1–11 (MSSAPAPGSAP) form an N-terminal arm region. 2 consecutive Beta/gamma crystallin 'Greek key' domains span residues 12-52 (VCLT…KVEN) and 53-99 (GAWV…RPVL). Residues 100–105 (CANHSD) form a connecting peptide region. Beta/gamma crystallin 'Greek key' domains are found at residues 106–147 (SRVT…KVSS) and 148–196 (GAWV…RRVQ).

The protein belongs to the beta/gamma-crystallin family. Homo/heterodimer, or complexes of higher-order. The structure of beta-crystallin oligomers seems to be stabilized through interactions between the N-terminal arms.

Crystallins are the dominant structural components of the vertebrate eye lens. This is Beta-crystallin A2 (Cryba2) from Mus musculus (Mouse).